The primary structure comprises 429 residues: MANVVVVGTQWGDEGKGKIVDWLSERADIVVRYQGGHNAGHTLVIDGVSYKLSLLPSGLVRGKLSIIGNGVVVDPHHFVAELKKLCDQGVKITPEILRIAENAPLILSLHRDLDAIRESGLSGLKIGTTKRGIGPAYEDKVGRRAIRVMDLAEKDTLMAKIERLLRHHNALRRGMGVAEIDSQALYDELMQVADKILPFMDCTWRLLDEGYREGKHILFEGAQGALLDNDFGTYPYVTSSNTVAGQACTGSGMGPGVIHYVLGIAKAYTTRVGEGPFPTEQINDIGEFLGTRGHEFGVVTGRKRRCGWFDAVLVRQMVAICGVQGIALTKLDVLDGLDEIKICIGYELDGRKIDYLPSSMGAQARVKPIYETLEGWKAKTAHTLRWEDLPVQAVKYIRYIEELINTKVALLSTSPEREDTILITDPFAN.

GTP-binding positions include 12–18 (GDEGKGK) and 40–42 (GHT). The active-site Proton acceptor is the Asp13. Mg(2+) contacts are provided by Asp13 and Gly40. IMP contacts are provided by residues 13–16 (DEGK), 38–41 (NAGH), Thr129, Arg143, Gln223, Thr238, and Arg302. Residue His41 is the Proton donor of the active site. A substrate-binding site is contributed by 298–304 (VVTGRKR). Residues Arg304, 330–332 (KLD), and 412–414 (STS) each bind GTP.

It belongs to the adenylosuccinate synthetase family. Homodimer. Requires Mg(2+) as cofactor.

The protein resides in the cytoplasm. It catalyses the reaction IMP + L-aspartate + GTP = N(6)-(1,2-dicarboxyethyl)-AMP + GDP + phosphate + 2 H(+). It functions in the pathway purine metabolism; AMP biosynthesis via de novo pathway; AMP from IMP: step 1/2. Its function is as follows. Plays an important role in the de novo pathway of purine nucleotide biosynthesis. Catalyzes the first committed step in the biosynthesis of AMP from IMP. The sequence is that of Adenylosuccinate synthetase from Bartonella tribocorum (strain CIP 105476 / IBS 506).